A 43-amino-acid chain; its full sequence is Protein PsbN (43 aa).

Residues alanine 4–tyrosine 24 form a helical membrane-spanning segment.

Belongs to the PsbN family.

It localises to the cellular thylakoid membrane. In terms of biological role, may play a role in photosystem I and II biogenesis. This is Protein PsbN from Trichormus variabilis (strain ATCC 29413 / PCC 7937) (Anabaena variabilis).